Consider the following 825-residue polypeptide: Ent-copalyl diphosphate synthase 2, chloroplastic (825 aa).

A chloroplast-targeting transit peptide spans 1–70 (MVLSSSCTTV…KGSSLTPIVR (70 aa)). A substrate-binding site is contributed by lysine 241. A DXDD motif motif is present at residues 373-376 (EVDD). Substrate is bound at residue lysine 459.

Belongs to the terpene synthase family. Tpsc subfamily. Requires Mg(2+) as cofactor. Expressed in tassels.

The protein resides in the plastid. The protein localises to the chloroplast. The enzyme catalyses (2E,6E,10E)-geranylgeranyl diphosphate = ent-copalyl diphosphate. Its pathway is plant hormone biosynthesis; gibberellin biosynthesis. Its function is as follows. Involved in gibberellin biosynthesis. Catalyzes the conversion of geranylgeranyl diphosphate to the gibberellin precursor ent-copalyl diphosphate (ent-CPP). Involved in the production of antifungal dolabralexin phytoalexins in response to biotic and abiotic stresses. In response to fungal infection and in associtation with KSL4, is involved in the production dolabradiene, a type of antifungal phytoalexin. This is Ent-copalyl diphosphate synthase 2, chloroplastic from Zea mays (Maize).